The following is a 227-amino-acid chain: Enolase-phosphatase E1 (227 aa).

The protein belongs to the HAD-like hydrolase superfamily. MasA/MtnC family. Monomer. It depends on Mg(2+) as a cofactor.

It carries out the reaction 5-methylsulfanyl-2,3-dioxopentyl phosphate + H2O = 1,2-dihydroxy-5-(methylsulfanyl)pent-1-en-3-one + phosphate. The protein operates within amino-acid biosynthesis; L-methionine biosynthesis via salvage pathway; L-methionine from S-methyl-5-thio-alpha-D-ribose 1-phosphate: step 3/6. Its pathway is amino-acid biosynthesis; L-methionine biosynthesis via salvage pathway; L-methionine from S-methyl-5-thio-alpha-D-ribose 1-phosphate: step 4/6. Bifunctional enzyme that catalyzes the enolization of 2,3-diketo-5-methylthiopentyl-1-phosphate (DK-MTP-1-P) into the intermediate 2-hydroxy-3-keto-5-methylthiopentenyl-1-phosphate (HK-MTPenyl-1-P), which is then dephosphorylated to form the acireductone 1,2-dihydroxy-3-keto-5-methylthiopentene (DHK-MTPene). This is Enolase-phosphatase E1 from Pseudomonas savastanoi pv. phaseolicola (strain 1448A / Race 6) (Pseudomonas syringae pv. phaseolicola (strain 1448A / Race 6)).